A 269-amino-acid polypeptide reads, in one-letter code: 3-methyl-2-oxobutanoate hydroxymethyltransferase (269 aa).

Mg(2+) is bound by residues Asp-50 and Asp-89. 3-methyl-2-oxobutanoate-binding positions include 50-51 (DS), Asp-89, and Lys-119. Position 121 (Glu-121) interacts with Mg(2+). The Proton acceptor role is filled by Glu-187.

This sequence belongs to the PanB family. As to quaternary structure, homodecamer; pentamer of dimers. Requires Mg(2+) as cofactor.

It localises to the cytoplasm. It carries out the reaction 3-methyl-2-oxobutanoate + (6R)-5,10-methylene-5,6,7,8-tetrahydrofolate + H2O = 2-dehydropantoate + (6S)-5,6,7,8-tetrahydrofolate. The protein operates within cofactor biosynthesis; (R)-pantothenate biosynthesis; (R)-pantoate from 3-methyl-2-oxobutanoate: step 1/2. Its function is as follows. Catalyzes the reversible reaction in which hydroxymethyl group from 5,10-methylenetetrahydrofolate is transferred onto alpha-ketoisovalerate to form ketopantoate. This chain is 3-methyl-2-oxobutanoate hydroxymethyltransferase (panB), found in Corynebacterium glutamicum (strain ATCC 13032 / DSM 20300 / JCM 1318 / BCRC 11384 / CCUG 27702 / LMG 3730 / NBRC 12168 / NCIMB 10025 / NRRL B-2784 / 534).